We begin with the raw amino-acid sequence, 242 residues long: N-alpha-acetyltransferase 60 (242 aa).

The Cytoplasmic segment spans residues 1-192; it reads MTEVVPSSAL…GGHPPWTILD (192 aa). The N-acetyltransferase domain occupies 13-182; the sequence is VSLRLLCHDD…DGFTYVLYIN (170 aa). Substrate is bound at residue Tyr-38. At Lys-79 the chain carries N6-acetyllysine; by autocatalysis. Tyr-97 is a catalytic residue. Leu-99 is a binding site for substrate. An acetyl-CoA-binding site is contributed by 101–103; sequence LGV. 3 positions are modified to N6-acetyllysine; by autocatalysis: Lys-105, Lys-109, and Lys-121. Residue 109 to 114 coordinates acetyl-CoA; the sequence is KHGIGS. His-138 is a catalytic residue. Residues Asn-143 and 150 to 153 contribute to the acetyl-CoA site; that span reads YENR. The tract at residues 162–173 is required for homodimerization; the sequence is PYYYSIRGVLKD. Tyr-165 serves as a coordination point for substrate. Residues 193-236 constitute an intramembrane region (helical); sequence YIQHLGSALANLSPCSIPHRIYRQAHSLLCSFLPWSSISTKGGI. Residues 237–242 lie on the Cytoplasmic side of the membrane; it reads EYSRTM.

It belongs to the acetyltransferase family. NAA60 subfamily. Monomer and homodimer; monomer in presence of substrate and homodimer in its absence. Acetylated: autoacetylation is required for optimal acetyltransferase activity.

The protein resides in the golgi apparatus membrane. It carries out the reaction N-terminal L-methionyl-[transmembrane protein] + acetyl-CoA = N-terminal N(alpha)-acetyl-L-methionyl-[transmembrane protein] + CoA + H(+). The enzyme catalyses L-lysyl-[protein] + acetyl-CoA = N(6)-acetyl-L-lysyl-[protein] + CoA + H(+). N-alpha-acetyltransferase that specifically mediates the acetylation of N-terminal residues of the transmembrane proteins, with a strong preference for N-termini facing the cytosol. Displays N-terminal acetyltransferase activity towards a range of N-terminal sequences including those starting with Met-Lys, Met-Val, Met-Ala and Met-Met. Required for normal chromosomal segregation during anaphase. May also show histone acetyltransferase activity; such results are however unclear in vivo and would require additional experimental evidences. In Mus musculus (Mouse), this protein is N-alpha-acetyltransferase 60 (Naa60).